Reading from the N-terminus, the 529-residue chain is Delayed-rectifier potassium channel regulatory subunit KCNS1 (529 aa).

At 1–217 the chain is on the cytoplasmic side; that stretch reads MLMLLVRGTH…LTMENPGYSL (217 aa). Residues 218–239 traverse the membrane as a helical segment; it reads PSKLFSCVSIGVVLASIAAMCI. The Extracellular segment spans residues 240–270; it reads HSLPEYQAREAAAAVATVAAGRSAEDVRDDP. The chain crosses the membrane as a helical span at residues 271–293; the sequence is VLRRLEYFCIAWFSFEVSSRLLL. The Cytoplasmic segment spans residues 294–304; it reads APSTRNFFCHP. A helical membrane pass occupies residues 305–322; that stretch reads LNLIDIVSVLPFYLTLLA. The Extracellular segment spans residues 323–342; that stretch reads SVALGGNNHGGTSGEELGHL. Residues 343–363 form a helical; Voltage-sensor membrane-spanning segment; the sequence is GKVVQVFRLMRIFRVLKLARH. The Cytoplasmic segment spans residues 364-378; it reads STGLRSLGATLKHSY. The chain crosses the membrane as a helical span at residues 379–400; the sequence is REVGILLLYLAVGVSVFSGVAY. The Extracellular portion of the chain corresponds to 401–413; it reads TAEKEEDVGFDTI. An intramembrane region (helical) is located at residues 414-425; that stretch reads PACWWWGTVSMT. A Selectivity filter motif is present at residues 426 to 431; sequence TVGYGD. The stretch at 426–433 is an intramembrane region; it reads TVGYGDVV. At 434 to 440 the chain is on the extracellular side; it reads PVTLAGK. The helical transmembrane segment at 441-469 threads the bilayer; the sequence is LAASGCILGGILVVALPITIIFNKFSHFY. The Cytoplasmic portion of the chain corresponds to 470 to 529; that stretch reads QRQKALEAAVRNSGHREFEDLLSSVDGVSDASLETSRETSQEGRSADLEAPSESPKPQIY. The segment at 498–529 is disordered; it reads SDASLETSRETSQEGRSADLEAPSESPKPQIY. The span at 504–516 shows a compositional bias: basic and acidic residues; sequence TSRETSQEGRSAD.

It belongs to the potassium channel family. S (TC 1.A.1.2) subfamily. Kv9.1/KCNS1 sub-subfamily. As to quaternary structure, heterotetramer with KCNB1. Heterotetramer with KCNB2. Does not form homomultimers.

The protein localises to the cell membrane. Functionally, potassium channel regulatory subunit that modulate the delayed rectifier voltage-gated potassium channel activity of KCNB1 and KCNB2 by altering their kinetics, expression levels, and shifting the half-inactivation potential to more polarized values. While it does not form functional channels on its own, it can form functional heterotetrameric channels with KCNB1 and KCNB2. Each regulatory subunit has unique regulatory properties that can lead to extensive inhibition, significant changes in kinetics, and/or substantial shifts in the voltage dependencies of the inactivation process. The sequence is that of Delayed-rectifier potassium channel regulatory subunit KCNS1 from Lemur catta (Ring-tailed lemur).